Consider the following 154-residue polypeptide: Interleukin-2 (154 aa).

Positions 1-20 are cleaved as a signal peptide; the sequence is MYRMQLLSCIALSLALITNS. Thr23 carries O-linked (GalNAc...) threonine glycosylation. The cysteines at positions 78 and 126 are disulfide-linked.

The protein belongs to the IL-2 family.

It localises to the secreted. Functionally, cytokine produced by activated CD4-positive helper T-cells and to a lesser extend activated CD8-positive T-cells and natural killer (NK) cells that plays pivotal roles in the immune response and tolerance. Binds to a receptor complex composed of either the high-affinity trimeric IL-2R (IL2RA/CD25, IL2RB/CD122 and IL2RG/CD132) or the low-affinity dimeric IL-2R (IL2RB and IL2RG). Interaction with the receptor leads to oligomerization and conformation changes in the IL-2R subunits resulting in downstream signaling starting with phosphorylation of JAK1 and JAK3. In turn, JAK1 and JAK3 phosphorylate the receptor to form a docking site leading to the phosphorylation of several substrates including STAT5. This process leads to activation of several pathways including STAT, phosphoinositide-3-kinase/PI3K and mitogen-activated protein kinase/MAPK pathways. Functions as a T-cell growth factor and can increase NK-cell cytolytic activity as well. Promotes strong proliferation of activated B-cells and subsequently immunoglobulin production. Plays a pivotal role in regulating the adaptive immune system by controlling the survival and proliferation of regulatory T-cells, which are required for the maintenance of immune tolerance. Moreover, participates in the differentiation and homeostasis of effector T-cell subsets, including Th1, Th2, Th17 as well as memory CD8-positive T-cells. The protein is Interleukin-2 (IL2) of Papio hamadryas (Hamadryas baboon).